A 252-amino-acid polypeptide reads, in one-letter code: tRNA (guanine-N(1)-)-methyltransferase (252 aa).

Residues Gly113 and 133 to 138 (IGDYVL) contribute to the S-adenosyl-L-methionine site.

Belongs to the RNA methyltransferase TrmD family. Homodimer.

The protein localises to the cytoplasm. The enzyme catalyses guanosine(37) in tRNA + S-adenosyl-L-methionine = N(1)-methylguanosine(37) in tRNA + S-adenosyl-L-homocysteine + H(+). Functionally, specifically methylates guanosine-37 in various tRNAs. This Xanthomonas campestris pv. campestris (strain B100) protein is tRNA (guanine-N(1)-)-methyltransferase.